Reading from the N-terminus, the 428-residue chain is Phosphoribosylamine--glycine ligase (428 aa).

Residues 109–316 (KDFLHRHGIP…LVELCLAALD (208 aa)) form the ATP-grasp domain. 135–196 (LRQVGAPVVV…EEFLTGEEAS (62 aa)) is an ATP binding site. The tract at residues 211-235 (SSQDHKARDDGDRGPNTGGMGAYSP) is disordered. Residues 213–223 (QDHKARDDGDR) are compositionally biased toward basic and acidic residues. Mg(2+) is bound by residues Glu286 and Asn288.

This sequence belongs to the GARS family. Mg(2+) is required as a cofactor. Requires Mn(2+) as cofactor.

It catalyses the reaction 5-phospho-beta-D-ribosylamine + glycine + ATP = N(1)-(5-phospho-beta-D-ribosyl)glycinamide + ADP + phosphate + H(+). Its pathway is purine metabolism; IMP biosynthesis via de novo pathway; N(1)-(5-phospho-D-ribosyl)glycinamide from 5-phospho-alpha-D-ribose 1-diphosphate: step 2/2. The polypeptide is Phosphoribosylamine--glycine ligase (purD) (Allochromatium vinosum (strain ATCC 17899 / DSM 180 / NBRC 103801 / NCIMB 10441 / D) (Chromatium vinosum)).